A 223-amino-acid polypeptide reads, in one-letter code: Nitrate reductase gamma chain (223 aa).

Residues 2-27 (SGQILWGIMPYIVLTIFIGGHIYRYQ) traverse the membrane as a helical segment. The Cytoplasmic portion of the chain corresponds to 28–45 (HDQFGWTAKSSELLEKKK). Residues 46 to 68 (LAAGSTLFHWGLLCVVGGHVMGI) traverse the membrane as a helical segment. 2 residues coordinate heme b: histidine 54 and histidine 64. The Extracellular portion of the chain corresponds to 69 to 81 (LIPEGVYASLGIS). The chain crosses the membrane as a helical span at residues 82–111 (EHMYHKMAIGAGLPAGIAACTGLVILTYRR). The Cytoplasmic portion of the chain corresponds to 112 to 123 (LFDKRIRKTSSP). The helical transmembrane segment at 124 to 147 (SDILTLLLLLFMMLSGVAATFLNI) threads the bilayer. Over 148–180 (DSKGFDYRTTVGPWFREIVLFRPDASLMESVPL) the chain is Extracellular. The chain crosses the membrane as a helical span at residues 181–196 (WFKFHIVIGYVVFILW). The heme b site is built by histidine 185 and histidine 203. Residues 197–223 (PFTRLVHVFSLPLKYLTRSYVVYRKRS) are Cytoplasmic-facing.

It depends on heme as a cofactor.

The protein localises to the cell membrane. The catalysed reaction is nitrate + a quinol = a quinone + nitrite + H2O. The gamma chain is a membrane-embedded heme-iron unit resembling cytochrome b, which transfers electrons from quinones to the beta subunit. The polypeptide is Nitrate reductase gamma chain (narI) (Bacillus subtilis (strain 168)).